Here is a 428-residue protein sequence, read N- to C-terminus: Glutamate-1-semialdehyde 2,1-aminomutase (428 aa).

Position 267 is an N6-(pyridoxal phosphate)lysine (Lys-267).

It belongs to the class-III pyridoxal-phosphate-dependent aminotransferase family. HemL subfamily. Homodimer. It depends on pyridoxal 5'-phosphate as a cofactor.

The protein localises to the cytoplasm. The enzyme catalyses (S)-4-amino-5-oxopentanoate = 5-aminolevulinate. It functions in the pathway porphyrin-containing compound metabolism; protoporphyrin-IX biosynthesis; 5-aminolevulinate from L-glutamyl-tRNA(Glu): step 2/2. The protein is Glutamate-1-semialdehyde 2,1-aminomutase of Trichlorobacter lovleyi (strain ATCC BAA-1151 / DSM 17278 / SZ) (Geobacter lovleyi).